We begin with the raw amino-acid sequence, 204 residues long: Probable dTDP-4-oxo-2,6-dideoxy-D-glucose 3,5-epimerase (204 aa).

Substrate contacts are provided by residues arginine 21, glutamate 26, 45 to 47, lysine 70, and histidine 117; that span reads QAN. Catalysis depends on tyrosine 130, which acts as the Proton donor. Residue glutamate 141 coordinates substrate. Positions 164 to 204 are disordered; it reads VGEGTPTHRPWRRPRRPGILPDYEGVPGALHRGGGRRGTGP.

The protein belongs to the dTDP-4-dehydrorhamnose 3,5-epimerase family.

The protein operates within antibiotic biosynthesis. Involved in the biosynthesis of one of the two 2,6-deoxysugars, dTDP-L-oleandrose, attached to the macrolactone ring oleandolide to produce the aglycone antibiotic oleandomycin. Probably catalyzes the conversion of dTDP-4-keto-2,6-dideoxy-alpha-D-glucose to dTDP-4-keto-2,6-dideoxy-beta-L-galactose. This chain is Probable dTDP-4-oxo-2,6-dideoxy-D-glucose 3,5-epimerase, found in Streptomyces antibioticus.